A 698-amino-acid chain; its full sequence is MTTIRGGSRRASLPALALLGVLLGACHSDDNAQVNTLPGFVSGNVRKTAYDGASDDLLTAGLGKTGLGSDTRPGFANPAQPTAAELRRLAIYSNYRALVDITPNGGYGRFWGPNVDLAGNDTLGEGKIAGTEYLAYSDDGSGRKNVTLLVQVPASFDPANPCIVTATSSGSRGVYGAIAAAGEWGLKRGCAVAYNDKGGGNGAHEIGTGVVTLIDGTLASASSAGSASLFTASESSSALAAFNSAFPNRYAYKHAHSQQNPEQDWGRVTLQAVEFAYWALNEQFGPAIDGARHGVRYRPGDITTIAASVSNGGAAALAAAEQDTRGWITAVVVGEPQINVRMTPGVTVEQGGVPAPSFGRPLADYATLANLLQPCAAAAVAAVGAPYLSALPVGLTQSIRVQRCATLAAAGLVSGADTASQANDALAQLHAAGYLADSDLLQAPMWDSQAIPAIAVTYANAYTRSRVTDNLCNFSFATTNSVTGAVAPPATSPMTSLFGAGNGVPPTNGINLVFNGASGGVDHRLATPDASFAGAFCLRQLWTANQLGIGANVDAVRVAANLQRKPAIIVQGRSDALVPVNHASRAYVAQNSATEGRASQLSFYEVTNGQHFDAFLSVPGFDTRFVPVHYYDEQALNLMWNHLKSGAPLPPSQVIRTVPRGGVPGAAPALSTANLPPIVQSPGSNAITVNAGVIDVPL.

The signal sequence occupies residues 1–32 (MTTIRGGSRRASLPALALLGVLLGACHSDDNA). S310 acts as the Charge relay system in catalysis.

It belongs to the D-(-)-3-hydroxybutyrate oligomer hydrolase family.

The protein localises to the secreted. It catalyses the reaction (3R)-hydroxybutanoate dimer + H2O = 2 (R)-3-hydroxybutanoate + H(+). It participates in lipid metabolism; butanoate metabolism. Its function is as follows. Participates in the degradation of poly-3-hydroxybutyrate (PHB). It works downstream of poly(3-hydroxybutyrate) depolymerase, hydrolyzing D(-)-3-hydroxybutyrate oligomers of various length (3HB-oligomers) into 3HB-monomers. In Burkholderia thailandensis (strain ATCC 700388 / DSM 13276 / CCUG 48851 / CIP 106301 / E264), this protein is D-(-)-3-hydroxybutyrate oligomer hydrolase.